The primary structure comprises 383 residues: Histidinol-phosphate aminotransferase (383 aa).

An N6-(pyridoxal phosphate)lysine modification is found at lysine 240.

The protein belongs to the class-II pyridoxal-phosphate-dependent aminotransferase family. Histidinol-phosphate aminotransferase subfamily. As to quaternary structure, homodimer. Requires pyridoxal 5'-phosphate as cofactor.

The enzyme catalyses L-histidinol phosphate + 2-oxoglutarate = 3-(imidazol-4-yl)-2-oxopropyl phosphate + L-glutamate. The protein operates within amino-acid biosynthesis; L-histidine biosynthesis; L-histidine from 5-phospho-alpha-D-ribose 1-diphosphate: step 7/9. This chain is Histidinol-phosphate aminotransferase, found in Oleidesulfovibrio alaskensis (strain ATCC BAA-1058 / DSM 17464 / G20) (Desulfovibrio alaskensis).